The primary structure comprises 371 residues: Flagellar P-ring protein (371 aa).

Positions Met-1–Ala-21 are cleaved as a signal peptide.

This sequence belongs to the FlgI family. The basal body constitutes a major portion of the flagellar organelle and consists of four rings (L,P,S, and M) mounted on a central rod.

Its subcellular location is the periplasm. It is found in the bacterial flagellum basal body. Functionally, assembles around the rod to form the L-ring and probably protects the motor/basal body from shearing forces during rotation. The polypeptide is Flagellar P-ring protein (Caulobacter sp. (strain K31)).